A 335-amino-acid chain; its full sequence is Holliday junction branch migration complex subunit RuvB (335 aa).

A large ATPase domain (RuvB-L) region spans residues 1–183 (MDERIISSET…FGVIDHLEFY (183 aa)). ATP is bound by residues Leu-22, Arg-23, Gly-64, Lys-67, Thr-68, Thr-69, 130-132 (EDY), Arg-173, Tyr-183, and Arg-220. A Mg(2+)-binding site is contributed by Thr-68. Positions 184-254 (TEEQLTEIVL…LAKEALTLLQ (71 aa)) are small ATPAse domain (RuvB-S). The interval 257–335 (PRGLDTIDQK…HLGISYEKEV (79 aa)) is head domain (RuvB-H). Residues Arg-293, Arg-312, and Arg-317 each coordinate DNA.

Belongs to the RuvB family. Homohexamer. Forms an RuvA(8)-RuvB(12)-Holliday junction (HJ) complex. HJ DNA is sandwiched between 2 RuvA tetramers; dsDNA enters through RuvA and exits via RuvB. An RuvB hexamer assembles on each DNA strand where it exits the tetramer. Each RuvB hexamer is contacted by two RuvA subunits (via domain III) on 2 adjacent RuvB subunits; this complex drives branch migration. In the full resolvosome a probable DNA-RuvA(4)-RuvB(12)-RuvC(2) complex forms which resolves the HJ.

It localises to the cytoplasm. The enzyme catalyses ATP + H2O = ADP + phosphate + H(+). In terms of biological role, the RuvA-RuvB-RuvC complex processes Holliday junction (HJ) DNA during genetic recombination and DNA repair, while the RuvA-RuvB complex plays an important role in the rescue of blocked DNA replication forks via replication fork reversal (RFR). RuvA specifically binds to HJ cruciform DNA, conferring on it an open structure. The RuvB hexamer acts as an ATP-dependent pump, pulling dsDNA into and through the RuvAB complex. RuvB forms 2 homohexamers on either side of HJ DNA bound by 1 or 2 RuvA tetramers; 4 subunits per hexamer contact DNA at a time. Coordinated motions by a converter formed by DNA-disengaged RuvB subunits stimulates ATP hydrolysis and nucleotide exchange. Immobilization of the converter enables RuvB to convert the ATP-contained energy into a lever motion, pulling 2 nucleotides of DNA out of the RuvA tetramer per ATP hydrolyzed, thus driving DNA branch migration. The RuvB motors rotate together with the DNA substrate, which together with the progressing nucleotide cycle form the mechanistic basis for DNA recombination by continuous HJ branch migration. Branch migration allows RuvC to scan DNA until it finds its consensus sequence, where it cleaves and resolves cruciform DNA. The protein is Holliday junction branch migration complex subunit RuvB of Listeria monocytogenes serotype 4a (strain HCC23).